The sequence spans 214 residues: Putative AgrB-like protein (214 aa).

A run of 5 helical transmembrane segments spans residues 41-61 (IISV…LIFL), 82-102 (CTLL…SSFF), 109-129 (IIVF…FKFA), 154-174 (ILTI…NLGW), and 182-202 (LSII…GNIL).

This sequence belongs to the AgrB family.

The protein localises to the cell membrane. Its function is as follows. May be involved in the proteolytic processing of a quorum sensing system signal molecule precursor. This Clostridium perfringens (strain SM101 / Type A) protein is Putative AgrB-like protein.